The chain runs to 247 residues: uncharacterized protein (247 aa).

The HTH merR-type domain occupies 11–85 (GMSIGAVLDL…LKVIRAQLDA (75 aa)). A DNA-binding region (H-T-H motif) is located at residues 14–38 (IGAVLDLLRPDFPDVTISKIRFLEA).

As to quaternary structure, homodimer.

Transcriptional regulator that binds to its own promoter and thus may play a role in the regulation of the cotranscribed genes Rv1827 and Rv1828. Can also bind several promoter regions of genes that are essential, including ftsZ. Binds to the imperfect everted repeat sequence CTCAA through its winged-HTH motif. This is an uncharacterized protein from Mycobacterium tuberculosis (strain ATCC 25618 / H37Rv).